The sequence spans 189 residues: Small ribosomal subunit protein uS4 (189 aa).

Positions R107–D181 constitute an S4 RNA-binding domain. The segment at Q161 to E189 is disordered.

Belongs to the universal ribosomal protein uS4 family. As to quaternary structure, component of the small ribosomal subunit. Part of the small subunit (SSU) processome, composed of more than 70 proteins and the RNA chaperone small nucleolar RNA (snoRNA) U3.

The protein resides in the cytoplasm. The protein localises to the nucleus. It localises to the nucleolus. In terms of biological role, component of the small ribosomal subunit. The ribosome is a large ribonucleoprotein complex responsible for the synthesis of proteins in the cell. Part of the small subunit (SSU) processome, first precursor of the small eukaryotic ribosomal subunit. During the assembly of the SSU processome in the nucleolus, many ribosome biogenesis factors, an RNA chaperone and ribosomal proteins associate with the nascent pre-rRNA and work in concert to generate RNA folding, modifications, rearrangements and cleavage as well as targeted degradation of pre-ribosomal RNA by the RNA exosome. This Caenorhabditis elegans protein is Small ribosomal subunit protein uS4 (rps-9).